The following is a 291-amino-acid chain: Tryptophan 2,3-dioxygenase (291 aa).

Substrate is bound by residues 51 to 55 (FIIQH), Tyr113, and Arg117. A heme-binding site is contributed by His240. Thr254 lines the substrate pocket.

The protein belongs to the tryptophan 2,3-dioxygenase family. Homotetramer. Heme serves as cofactor.

It carries out the reaction L-tryptophan + O2 = N-formyl-L-kynurenine. Its pathway is amino-acid degradation; L-tryptophan degradation via kynurenine pathway; L-kynurenine from L-tryptophan: step 1/2. Its function is as follows. Heme-dependent dioxygenase that catalyzes the oxidative cleavage of the L-tryptophan (L-Trp) pyrrole ring and converts L-tryptophan to N-formyl-L-kynurenine. Catalyzes the oxidative cleavage of the indole moiety. The chain is Tryptophan 2,3-dioxygenase from Myxococcus xanthus (strain DK1622).